Reading from the N-terminus, the 255-residue chain is Aliphatic sulfonates import ATP-binding protein SsuB (255 aa).

The ABC transporter domain occupies 7-231 (IKEKAFVQEG…PRNRTTPDFQ (225 aa)). 39–46 (GPSGCGKS) provides a ligand contact to ATP.

The protein belongs to the ABC transporter superfamily. Aliphatic sulfonates importer (TC 3.A.1.17.2) family. In terms of assembly, the complex is composed of two ATP-binding proteins (SsuB), two transmembrane proteins (SsuC) and a solute-binding protein (SsuA).

It is found in the cell membrane. It catalyses the reaction ATP + H2O + aliphatic sulfonate-[sulfonate-binding protein]Side 1 = ADP + phosphate + aliphatic sulfonateSide 2 + [sulfonate-binding protein]Side 1.. Functionally, part of the ABC transporter complex SsuABC involved in aliphatic sulfonates import. Responsible for energy coupling to the transport system. Is also involved in taurine transport. In Bacillus subtilis (strain 168), this protein is Aliphatic sulfonates import ATP-binding protein SsuB.